Consider the following 203-residue polypeptide: Interferon type B (203 aa).

A signal peptide spans 1 to 27; sequence MTANHQSPGMHSILLLLLLPALTTTFS. Disulfide bonds link C28–C125 and C57–C164. Residues N37 and N160 are each glycosylated (N-linked (GlcNAc...) asparagine).

This sequence belongs to the alpha/beta interferon family.

The protein localises to the secreted. Its function is as follows. Has antiviral activities. In Gallus gallus (Chicken), this protein is Interferon type B (IFNB).